The primary structure comprises 491 residues: Peptidoglycan D,D-transpeptidase PbpA (491 aa).

The Cytoplasmic portion of the chain corresponds to 1-7; it reads MNASLRR. Residues 8–28 form a helical; Signal-anchor for type II membrane protein membrane-spanning segment; it reads ISVTVMALIVLLLLNATMTQV. The Periplasmic portion of the chain corresponds to 29–491; sequence FTADGLRADP…VIEAALQGEP (463 aa). Positions 160-484 are transpeptidase; that stretch reads GAVVALEPST…AAPIGRAVIE (325 aa). The active-site Acyl-ester intermediate is Ser-222.

It belongs to the transpeptidase family.

The protein resides in the cell inner membrane. It carries out the reaction Preferential cleavage: (Ac)2-L-Lys-D-Ala-|-D-Ala. Also transpeptidation of peptidyl-alanyl moieties that are N-acyl substituents of D-alanine.. Its pathway is cell wall biogenesis; peptidoglycan biosynthesis. Transpeptidase that catalyzes cross-linking of the peptidoglycan cell wall. Required for the regulation of cell length. In Mycobacterium tuberculosis (strain CDC 1551 / Oshkosh), this protein is Peptidoglycan D,D-transpeptidase PbpA (pbpA).